We begin with the raw amino-acid sequence, 115 residues long: NADH-ubiquinone oxidoreductase chain 3 (115 aa).

A run of 3 helical transmembrane segments spans residues 4–24 (FMAL…AFWL), 55–75 (FFLV…LLPL), and 87–107 (MMLT…YEWV).

This sequence belongs to the complex I subunit 3 family. As to quaternary structure, core subunit of respiratory chain NADH dehydrogenase (Complex I) which is composed of 45 different subunits. Interacts with TMEM186. Interacts with TMEM242.

Its subcellular location is the mitochondrion inner membrane. It carries out the reaction a ubiquinone + NADH + 5 H(+)(in) = a ubiquinol + NAD(+) + 4 H(+)(out). In terms of biological role, core subunit of the mitochondrial membrane respiratory chain NADH dehydrogenase (Complex I) which catalyzes electron transfer from NADH through the respiratory chain, using ubiquinone as an electron acceptor. Essential for the catalytic activity of complex I. The sequence is that of NADH-ubiquinone oxidoreductase chain 3 from Osgoodomys banderanus (Michoacan deer mouse).